We begin with the raw amino-acid sequence, 1188 residues long: DNA-directed RNA polymerase subunit beta (1188 aa).

This sequence belongs to the RNA polymerase beta chain family. In terms of assembly, the RNAP catalytic core consists of 2 alpha, 1 beta, 1 beta' and 1 omega subunit. When a sigma factor is associated with the core the holoenzyme is formed, which can initiate transcription.

It catalyses the reaction RNA(n) + a ribonucleoside 5'-triphosphate = RNA(n+1) + diphosphate. In terms of biological role, DNA-dependent RNA polymerase catalyzes the transcription of DNA into RNA using the four ribonucleoside triphosphates as substrates. In Streptococcus equi subsp. equi (strain 4047), this protein is DNA-directed RNA polymerase subunit beta.